A 154-amino-acid polypeptide reads, in one-letter code: Myoglobin (154 aa).

Residues 2-148 (VLSDAEWHLV…FRKDIAAKYK (147 aa)) enclose the Globin domain. S4 is subject to Phosphoserine. Position 65 (H65) interacts with nitrite. Residue H65 participates in O2 binding. T68 is subject to Phosphothreonine. Residue H94 coordinates heme b.

Belongs to the globin family. Monomeric.

The protein localises to the cytoplasm. It localises to the sarcoplasm. The enzyme catalyses Fe(III)-heme b-[protein] + nitric oxide + H2O = Fe(II)-heme b-[protein] + nitrite + 2 H(+). The catalysed reaction is H2O2 + AH2 = A + 2 H2O. Monomeric heme protein which primary function is to store oxygen and facilitate its diffusion within muscle tissues. Reversibly binds oxygen through a pentacoordinated heme iron and enables its timely and efficient release as needed during periods of heightened demand. Depending on the oxidative conditions of tissues and cells, and in addition to its ability to bind oxygen, it also has a nitrite reductase activity whereby it regulates the production of bioactive nitric oxide. Under stress conditions, like hypoxia and anoxia, it also protects cells against reactive oxygen species thanks to its pseudoperoxidase activity. The sequence is that of Myoglobin (MB) from Balaenoptera acutorostrata (Common minke whale).